A 220-amino-acid polypeptide reads, in one-letter code: Protein-methionine-sulfoxide reductase heme-binding subunit MsrQ (220 aa).

Helical transmembrane passes span 20-40 (LWLLYTAGFVPAVWTFYLGAT), 51-71 (FEHLLGLWALRFLILTLLVTP), 86-106 (ALGLLAFYYALMHFTTYMVLD), 122-142 (PFITIGMISLALLVPLALTSN), 153-173 (WSSLHKLVYIAIAGSAVHFLM), and 175-195 (VKSWPAEPVIYAAIVAALLLW).

It belongs to the MsrQ family. As to quaternary structure, heterodimer of a catalytic subunit (MsrP) and a heme-binding subunit (MsrQ). FMN is required as a cofactor. It depends on heme b as a cofactor.

Its subcellular location is the cell inner membrane. In terms of biological role, part of the MsrPQ system that repairs oxidized periplasmic proteins containing methionine sulfoxide residues (Met-O), using respiratory chain electrons. Thus protects these proteins from oxidative-stress damage caused by reactive species of oxygen and chlorine generated by the host defense mechanisms. MsrPQ is essential for the maintenance of envelope integrity under bleach stress, rescuing a wide series of structurally unrelated periplasmic proteins from methionine oxidation. MsrQ provides electrons for reduction to the reductase catalytic subunit MsrP, using the quinone pool of the respiratory chain. The sequence is that of Protein-methionine-sulfoxide reductase heme-binding subunit MsrQ from Brucella melitensis biotype 2 (strain ATCC 23457).